The chain runs to 68 residues: Beta-toxin Cl13 (68 aa).

The LCN-type CS-alpha/beta domain occupies 1-66 (KEGYLVDYHT…VWPLPNKRCK (66 aa)). 4 disulfide bridges follow: cysteine 12–cysteine 65, cysteine 16–cysteine 41, cysteine 25–cysteine 46, and cysteine 29–cysteine 48. Lysine 66 carries the lysine amide modification.

Belongs to the long (4 C-C) scorpion toxin superfamily. Sodium channel inhibitor family. Beta subfamily. Expressed by the venom gland.

The protein localises to the secreted. In terms of biological role, beta toxins bind voltage-independently at site-4 of sodium channels (Nav) and shift the voltage of activation toward more negative potentials thereby affecting sodium channel activation and promoting spontaneous and repetitive firing. Inhibits sodium channels Nav1.4/SCN4A, Nav1.5/SCN5A and Nav1.6/SCN8A. Also has a weak inhibitory effect on Nav1.2/SCN2A. Is lethal to mice. This Centruroides limpidus (Mexican scorpion) protein is Beta-toxin Cl13.